The sequence spans 200 residues: Recombination protein RecR (200 aa).

The C4-type zinc-finger motif lies at C57–C72. The Toprim domain occupies S80 to P175.

This sequence belongs to the RecR family.

Functionally, may play a role in DNA repair. It seems to be involved in an RecBC-independent recombinational process of DNA repair. It may act with RecF and RecO. The polypeptide is Recombination protein RecR (Alcanivorax borkumensis (strain ATCC 700651 / DSM 11573 / NCIMB 13689 / SK2)).